Consider the following 36-residue polypeptide: Zinc metalloproteinase-disintegrin-like VaH1 (36 aa).

Residues 1-36 (MVTKYSSIFMSPILSNPPILYFSDCSREXYQKXLTN) form the Peptidase M12B domain.

It belongs to the venom metalloproteinase (M12B) family. P-III subfamily. P-IIIa sub-subfamily. As to quaternary structure, monomer. Requires Zn(2+) as cofactor. Post-translationally, the N-terminus is blocked. Glycosylated. In terms of tissue distribution, expressed by the venom gland.

Its subcellular location is the secreted. Its activity is regulated as follows. Inhibited by EDTA, but not inhibited by iodoacetamide, PMSF and pepstatin A. Snake venom zinc metalloprotease that exhibits strong hemorrhagic activity. It also degrades alpha-chain of fibrinogen (FGA), but not the beta- and the gamma-chains. Possesses potent azocaseinolytic activity and cleaves insulin B-chain, hydrolyzing it at positions Ala(14)-Leu(15), followed by Tyr(16)-Leu(17) and His(10)-Leu(11). In vivo, subcutaneous injection into mice induces strong hemorrhage. The protein is Zinc metalloproteinase-disintegrin-like VaH1 of Vipera ammodytes ammodytes (Western sand viper).